The following is an 800-amino-acid chain: Phenylalanine--tRNA ligase beta subunit (800 aa).

One can recognise a tRNA-binding domain in the interval 39-154 (TKDIKNLVVG…EAQVPGTDAL (116 aa)). The B5 domain occupies 408–483 (AFITPIDITA…RIYGYDDIPS (76 aa)). 4 residues coordinate Mg(2+): aspartate 461, aspartate 467, glutamate 470, and glutamate 471. The 93-residue stretch at 708–800 (PRFPGMSRDI…ALIEQGAVIR (93 aa)) folds into the FDX-ACB domain.

The protein belongs to the phenylalanyl-tRNA synthetase beta subunit family. Type 1 subfamily. As to quaternary structure, tetramer of two alpha and two beta subunits. It depends on Mg(2+) as a cofactor.

It is found in the cytoplasm. The enzyme catalyses tRNA(Phe) + L-phenylalanine + ATP = L-phenylalanyl-tRNA(Phe) + AMP + diphosphate + H(+). In Staphylococcus aureus (strain USA300), this protein is Phenylalanine--tRNA ligase beta subunit.